A 316-amino-acid chain; its full sequence is CD-NTase-associated protein 12 (316 aa).

One can recognise a TIR domain in the interval 4-121 (RIFIGSSSEG…MLGITQTRYE (118 aa)). Positions 161–316 (STVIAISYFE…ECVEIIEPQP (156 aa)) are STING domain. 3 residues coordinate 3',3'-c-di-GMP: phenylalanine 172, proline 237, and aspartate 253.

It in the C-terminal section; belongs to the bacterial STING family. As to quaternary structure, forms homodimers; in the presence of c-di-GMP forms filaments with an ordered array of parallel-stacked subunits.

The catalysed reaction is NAD(+) + H2O = ADP-D-ribose + nicotinamide + H(+). NAD(+) hydrolase activity is strongly stimulated by c-di-GMP, weakly by 3'3'-cGAMP, very weakly by c-di-AMP but not at all by 2'3'-cGAMP. Self-association of TIR domains is required for NADase activity. Effector protein of a CBASS antiviral system with NAD(+) hydrolase activity. CBASS (cyclic oligonucleotide-based antiphage signaling system) provides immunity against bacteriophage. The CD-NTase protein synthesizes cyclic nucleotides in response to infection; these serve as specific second messenger signals. The signals activate a diverse range of effectors, leading to bacterial cell death and thus abortive phage infection. A type I-D(GG) CBASS system. Functionally, binds c-di-GMP (synthesized by the cognate CdnE encoded upstream in the same operon) but not c-di-AMP, 2'-3'-cGAMP, 3'-3'-cGAMP or cUMP-AMP (tested without the N-terminal TIR domain). Upon activation by c-di-GMP forms filaments which hydrolyze NAD(+); filament formation is required for enzyme activation. The protein is CD-NTase-associated protein 12 of Lachnospiraceae bacterium (strain RUG226).